Here is a 429-residue protein sequence, read N- to C-terminus: MANVTVIGSQWGDEGKGKIVDWLASRADAVVRFQGGHNAGHTLVVGEQVYKLSLLPSGIVTGTLSIIGNGVVLDPWALRDEITKLRGQGVEINADNFAIADNCALILPFHRDLDALRETAAGAGKIGTTGRGIGPAYEDKVGRRAIRVCDLAHLDHLEPQLDRLTAHHDALRAGFGEPPIDRDKLVADLREIADYVLEYAQPVWKRLKKVRKAGARILFEGAQGVLLDIDHGTYPFVTSSNTVSGTAASGSGLGPGAVGFVLGIAKAYTTRVGSGPFPTELEDETGQRLGERGHEFGTVTGRKRRCGWFDAVLVRQSCAVSGVTGIALTKLDVLDGFDTIRICTGYRLRGKILDYFPAHAADQAAVEPIYEEMDGWHESTAGARSYADLPAQAIKYIQRVQELIETPIALVSTSPEREDTILIRDPFSD.

GTP contacts are provided by residues Gly12–Lys18 and Gly40–Thr42. Catalysis depends on Asp13, which acts as the Proton acceptor. Mg(2+) contacts are provided by Asp13 and Gly40. Residues Asp13–Lys16, Asn38–His41, Thr129, Arg143, Gln223, Thr238, and Arg302 each bind IMP. The Proton donor role is filled by His41. Residue Thr298–Arg304 coordinates substrate. GTP is bound by residues Arg304, Lys330–Asp332, and Ser412–Ser414.

The protein belongs to the adenylosuccinate synthetase family. Homodimer. Mg(2+) is required as a cofactor.

Its subcellular location is the cytoplasm. The catalysed reaction is IMP + L-aspartate + GTP = N(6)-(1,2-dicarboxyethyl)-AMP + GDP + phosphate + 2 H(+). It participates in purine metabolism; AMP biosynthesis via de novo pathway; AMP from IMP: step 1/2. Its function is as follows. Plays an important role in the de novo pathway of purine nucleotide biosynthesis. Catalyzes the first committed step in the biosynthesis of AMP from IMP. The polypeptide is Adenylosuccinate synthetase (Sphingopyxis alaskensis (strain DSM 13593 / LMG 18877 / RB2256) (Sphingomonas alaskensis)).